The sequence spans 227 residues: MAYPFQLGLQDATSPIMEELMNFHDHTLMIVFLISSLVLYIISLMLTTKLTHTSTMDAQEVETIWTILPAVILILIALPSLRILYMMDEINNPVLTVKTMGHQWYWSYEYTDYEDLCFDSYMIPTNDLKPGELRLLEVDNRVVLPMELPIRMLISSEDVLHSWAVPSLGLKTDAIPGRLNQATVTSNRPGLFYGQCSEICGSNHSFMPIVLEMVPLKNFENWSTSMI.

At 1 to 14 the chain is on the mitochondrial intermembrane side; the sequence is MAYPFQLGLQDATS. Residues 15 to 45 form a helical membrane-spanning segment; sequence PIMEELMNFHDHTLMIVFLISSLVLYIISLM. Residues 46-59 are Mitochondrial matrix-facing; sequence LTTKLTHTSTMDAQ. The chain crosses the membrane as a helical span at residues 60–87; sequence EVETIWTILPAVILILIALPSLRILYMM. At 88-227 the chain is on the mitochondrial intermembrane side; sequence DEINNPVLTV…NFENWSTSMI (140 aa). Residues His161, Cys196, Glu198, Cys200, His204, and Met207 each coordinate Cu cation. Glu198 serves as a coordination point for Mg(2+).

The protein belongs to the cytochrome c oxidase subunit 2 family. In terms of assembly, component of the cytochrome c oxidase (complex IV, CIV), a multisubunit enzyme composed of 14 subunits. The complex is composed of a catalytic core of 3 subunits MT-CO1, MT-CO2 and MT-CO3, encoded in the mitochondrial DNA, and 11 supernumerary subunits COX4I, COX5A, COX5B, COX6A, COX6B, COX6C, COX7A, COX7B, COX7C, COX8 and NDUFA4, which are encoded in the nuclear genome. The complex exists as a monomer or a dimer and forms supercomplexes (SCs) in the inner mitochondrial membrane with NADH-ubiquinone oxidoreductase (complex I, CI) and ubiquinol-cytochrome c oxidoreductase (cytochrome b-c1 complex, complex III, CIII), resulting in different assemblies (supercomplex SCI(1)III(2)IV(1) and megacomplex MCI(2)III(2)IV(2)). Found in a complex with TMEM177, COA6, COX18, COX20, SCO1 and SCO2. Interacts with TMEM177 in a COX20-dependent manner. Interacts with COX20. Interacts with COX16. It depends on Cu cation as a cofactor.

It localises to the mitochondrion inner membrane. The catalysed reaction is 4 Fe(II)-[cytochrome c] + O2 + 8 H(+)(in) = 4 Fe(III)-[cytochrome c] + 2 H2O + 4 H(+)(out). Functionally, component of the cytochrome c oxidase, the last enzyme in the mitochondrial electron transport chain which drives oxidative phosphorylation. The respiratory chain contains 3 multisubunit complexes succinate dehydrogenase (complex II, CII), ubiquinol-cytochrome c oxidoreductase (cytochrome b-c1 complex, complex III, CIII) and cytochrome c oxidase (complex IV, CIV), that cooperate to transfer electrons derived from NADH and succinate to molecular oxygen, creating an electrochemical gradient over the inner membrane that drives transmembrane transport and the ATP synthase. Cytochrome c oxidase is the component of the respiratory chain that catalyzes the reduction of oxygen to water. Electrons originating from reduced cytochrome c in the intermembrane space (IMS) are transferred via the dinuclear copper A center (CU(A)) of subunit 2 and heme A of subunit 1 to the active site in subunit 1, a binuclear center (BNC) formed by heme A3 and copper B (CU(B)). The BNC reduces molecular oxygen to 2 water molecules using 4 electrons from cytochrome c in the IMS and 4 protons from the mitochondrial matrix. The chain is Cytochrome c oxidase subunit 2 (MT-CO2) from Apodemus mystacinus (Broad-toothed field mouse).